A 299-amino-acid polypeptide reads, in one-letter code: MKPDAHLVKQFLLNLQDTICQQLTAVDGAEFVEDSWQREAGGGGRSRVLRNGGVFEQAGVNFSHVHGDAMPASATAHRPELAGRSFEAMGVSLVVHPHNPYVPTSHANVRFFIAEKPGAEPVWWFGGGFDLTPFYGFEEDAIHWHRTARDLCLPFGEDVYPRYKKWCDEYFYLKHRNEQRGIGGLFFDDLNTPDFDHCFAFMQAVGKGYTNAYLPIVERRKTMAYGERERNFQLYRRGRYVEFNLVWDRGTLFGLQTGGRTESILMSMPPLVRWEYDYQPKDGSPEAALNEFIKVRDWV.

Ser92 provides a ligand contact to substrate. His96 and His106 together coordinate Mn(2+). His106 (proton donor) is an active-site residue. Residue 108–110 coordinates substrate; that stretch reads NVR. Positions 145 and 175 each coordinate Mn(2+). The tract at residues 240–275 is important for dimerization; that stretch reads YVEFNLVWDRGTLFGLQTGGRTESILMSMPPLVRWE. Position 258–260 (258–260) interacts with substrate; it reads GGR.

The protein belongs to the aerobic coproporphyrinogen-III oxidase family. Homodimer. Mn(2+) is required as a cofactor.

It is found in the cytoplasm. The catalysed reaction is coproporphyrinogen III + O2 + 2 H(+) = protoporphyrinogen IX + 2 CO2 + 2 H2O. It functions in the pathway porphyrin-containing compound metabolism; protoporphyrin-IX biosynthesis; protoporphyrinogen-IX from coproporphyrinogen-III (O2 route): step 1/1. Its function is as follows. Involved in the heme biosynthesis. Catalyzes the aerobic oxidative decarboxylation of propionate groups of rings A and B of coproporphyrinogen-III to yield the vinyl groups in protoporphyrinogen-IX. The protein is Oxygen-dependent coproporphyrinogen-III oxidase of Escherichia coli O7:K1 (strain IAI39 / ExPEC).